The sequence spans 664 residues: Kinesin-like protein KIF2B (664 aa).

Residue T125 is modified to Phosphothreonine; by PLK1. Residues 149–177 (CLREIEKLQKQREKRRRLQLEIRARRALD) are a coiled coil. S204 carries the phosphoserine; by PLK1 modification. The region spanning 213 to 543 (RICVCVRKRP…LRYANRVKEL (331 aa)) is the Kinesin motor domain. Residue 303 to 310 (GQTGSGKT) participates in ATP binding. The tract at residues 583–607 (VQKEEEKESDELTSTKEPAASWSRS) is disordered. Residues 642 to 663 (VLTEIQKKLQLLRDDLQKKSQA) adopt a coiled-coil conformation.

The protein belongs to the TRAFAC class myosin-kinesin ATPase superfamily. Kinesin family. MCAK/KIF2 subfamily. Post-translationally, phosphorylation at Thr-125 by PLK1 is required for activity in the correction of kinetochore-microtubules attachment errors, while phosphorylation at Ser-204 also by PLK1 is required for the kinetochore localization and activity in prometaphase.

It is found in the cytoplasm. The protein resides in the cytoskeleton. The protein localises to the microtubule organizing center. Its subcellular location is the centrosome. It localises to the spindle. It is found in the chromosome. The protein resides in the centromere. The protein localises to the kinetochore. Plus end-directed microtubule-dependent motor required for spindle assembly and chromosome movement. Has microtubule depolymerization activity. Plays a role in chromosome congression. This chain is Kinesin-like protein KIF2B, found in Rattus norvegicus (Rat).